A 431-amino-acid chain; its full sequence is Enolase (431 aa).

Residue Q162 participates in (2R)-2-phosphoglycerate binding. E204 (proton donor) is an active-site residue. The Mg(2+) site is built by D241, E284, and D311. (2R)-2-phosphoglycerate is bound by residues K336, R365, S366, and K387. The active-site Proton acceptor is K336.

Belongs to the enolase family. It depends on Mg(2+) as a cofactor.

The protein resides in the cytoplasm. Its subcellular location is the secreted. The protein localises to the cell surface. The enzyme catalyses (2R)-2-phosphoglycerate = phosphoenolpyruvate + H2O. It participates in carbohydrate degradation; glycolysis; pyruvate from D-glyceraldehyde 3-phosphate: step 4/5. Catalyzes the reversible conversion of 2-phosphoglycerate (2-PG) into phosphoenolpyruvate (PEP). It is essential for the degradation of carbohydrates via glycolysis. The sequence is that of Enolase from Sorangium cellulosum (strain So ce56) (Polyangium cellulosum (strain So ce56)).